We begin with the raw amino-acid sequence, 237 residues long: MQKQAELYRGKAKTVYSTENPDLLVLEFRNDTSAGDGARIEKFDRKGMVNNKFNHFIMTKLAEAGIPTQMERLLSDTECLVKKLEMVPVECVVRNRAAGSLVKRLGVEEGMELNPPIFDLFLKNDALHDPMVNSSYCETFGWVSQENLARMKALTYKANDVLKKLFDDAGLILVDFKLEFGLYKGEVVLGDEFSPDGSRLWDKETLDKMDKDRFRQSLGGLIEAYEAVARRLGVKLD.

This sequence belongs to the SAICAR synthetase family.

It carries out the reaction 5-amino-1-(5-phospho-D-ribosyl)imidazole-4-carboxylate + L-aspartate + ATP = (2S)-2-[5-amino-1-(5-phospho-beta-D-ribosyl)imidazole-4-carboxamido]succinate + ADP + phosphate + 2 H(+). The protein operates within purine metabolism; IMP biosynthesis via de novo pathway; 5-amino-1-(5-phospho-D-ribosyl)imidazole-4-carboxamide from 5-amino-1-(5-phospho-D-ribosyl)imidazole-4-carboxylate: step 1/2. This Salmonella arizonae (strain ATCC BAA-731 / CDC346-86 / RSK2980) protein is Phosphoribosylaminoimidazole-succinocarboxamide synthase.